The following is a 607-amino-acid chain: Phosphoenolpyruvate carboxykinase [GTP] (607 aa).

Substrate contacts are provided by residues Arg-81 and 221-223 (YGG). Lys-230 and His-250 together coordinate Mn(2+). Ser-272 contacts substrate. Position 273–278 (273–278 (ACGKTN)) interacts with GTP. Cys-274 is a catalytic residue. Asp-297 contributes to the Mn(2+) binding site. A substrate-binding site is contributed by 388–390 (NSR). Residues Arg-390, Arg-421, and 516 to 519 (FGDN) each bind GTP.

It belongs to the phosphoenolpyruvate carboxykinase [GTP] family. Monomer. The cofactor is Mn(2+).

It is found in the cytoplasm. It catalyses the reaction oxaloacetate + GTP = phosphoenolpyruvate + GDP + CO2. Its pathway is carbohydrate biosynthesis; gluconeogenesis. Its function is as follows. Catalyzes the conversion of oxaloacetate (OAA) to phosphoenolpyruvate (PEP), the rate-limiting step in the metabolic pathway that produces glucose from lactate and other precursors derived from the citric acid cycle. The sequence is that of Phosphoenolpyruvate carboxykinase [GTP] from Renibacterium salmoninarum (strain ATCC 33209 / DSM 20767 / JCM 11484 / NBRC 15589 / NCIMB 2235).